A 335-amino-acid polypeptide reads, in one-letter code: Cytoskeleton protein RodZ (335 aa).

The Cytoplasmic portion of the chain corresponds to 1-111 (MNTEATHDQN…LGKRRKKRDG (111 aa)). One can recognise an HTH cro/C1-type domain in the interval 19-71 (LRNAREQLGLSQQAVAERLCLKVSTVRDIEEDKAPADLASTFLRGYIRSYARL). A DNA-binding region (H-T-H motif) is located at residues 30–49 (QQAVAERLCLKVSTVRDIEE). Residues 112–132 (WLMTFTWLVLFVVIGLSGAWW) traverse the membrane as a helical; Signal-anchor for type II membrane protein segment. The Periplasmic portion of the chain corresponds to 133–335 (WQDHKAQQEE…TLNAEQSPAQ (203 aa)). The span at 148–164 (DQSSAELNNNQSQSVPL) shows a compositional bias: polar residues. Residues 148 to 239 (DQSSAELNNN…PDGAAPLPTD (92 aa)) are disordered. 2 stretches are compositionally biased toward low complexity: residues 165 to 205 (DTST…DPQQ) and 217 to 239 (DTAA…LPTD).

Belongs to the RodZ family.

It localises to the cell inner membrane. Its function is as follows. Cytoskeletal protein that is involved in cell-shape control through regulation of the length of the long axis. This chain is Cytoskeleton protein RodZ, found in Escherichia coli O6:K15:H31 (strain 536 / UPEC).